The following is a 300-amino-acid chain: tRNA dimethylallyltransferase (300 aa).

11-18 (GPTAVGKS) lines the ATP pocket. 13–18 (TAVGKS) is a binding site for substrate. An interaction with substrate tRNA region spans residues 35-38 (DSVQ).

Belongs to the IPP transferase family. Monomer. Requires Mg(2+) as cofactor.

It catalyses the reaction adenosine(37) in tRNA + dimethylallyl diphosphate = N(6)-dimethylallyladenosine(37) in tRNA + diphosphate. Functionally, catalyzes the transfer of a dimethylallyl group onto the adenine at position 37 in tRNAs that read codons beginning with uridine, leading to the formation of N6-(dimethylallyl)adenosine (i(6)A). The polypeptide is tRNA dimethylallyltransferase (Borrelia hermsii (strain HS1 / DAH)).